The following is a 439-amino-acid chain: GTPase Der (439 aa).

2 EngA-type G domains span residues proline 4–glutamate 168 and isoleucine 177–threonine 352. Residues glycine 10–serine 17, aspartate 57–isoleucine 61, asparagine 120–aspartate 123, glycine 183–serine 190, aspartate 230–leucine 234, and asparagine 295–aspartate 298 each bind GTP. A KH-like domain is found at lysine 353–lysine 437.

The protein belongs to the TRAFAC class TrmE-Era-EngA-EngB-Septin-like GTPase superfamily. EngA (Der) GTPase family. Associates with the 50S ribosomal subunit.

GTPase that plays an essential role in the late steps of ribosome biogenesis. This Clostridium botulinum (strain Langeland / NCTC 10281 / Type F) protein is GTPase Der.